Reading from the N-terminus, the 122-residue chain is MPHAWQSCIFDSFSRFVELFLAYNKQRLYFRSSPLLTAEFLRLTNEMQERTKSGAAPNARVLIGQALGAETRCALQFPHDKAKTVSFPRIIHTSITNPWIKLSLVRPYYTFLFSCMLYKIDP.

This is an uncharacterized protein from Saccharomyces cerevisiae (strain ATCC 204508 / S288c) (Baker's yeast).